A 289-amino-acid chain; its full sequence is 33 kDa chaperonin (289 aa).

Intrachain disulfides connect Cys230–Cys232 and Cys263–Cys266.

It belongs to the HSP33 family. Post-translationally, under oxidizing conditions two disulfide bonds are formed involving the reactive cysteines. Under reducing conditions zinc is bound to the reactive cysteines and the protein is inactive.

It is found in the cytoplasm. Redox regulated molecular chaperone. Protects both thermally unfolding and oxidatively damaged proteins from irreversible aggregation. Plays an important role in the bacterial defense system toward oxidative stress. In Shigella flexneri serotype 5b (strain 8401), this protein is 33 kDa chaperonin.